The primary structure comprises 242 residues: Glycerol-3-phosphate acyltransferase (242 aa).

The next 6 helical transmembrane spans lie at Ile-7–Ala-27, Ile-61–Ile-81, Tyr-102–Phe-122, Gly-135–Ile-155, Val-162–Leu-182, and Asp-201–Trp-221.

It belongs to the PlsY family. In terms of assembly, probably interacts with PlsX.

It is found in the cell membrane. It catalyses the reaction an acyl phosphate + sn-glycerol 3-phosphate = a 1-acyl-sn-glycero-3-phosphate + phosphate. It functions in the pathway lipid metabolism; phospholipid metabolism. Its function is as follows. Catalyzes the transfer of an acyl group from acyl-phosphate (acyl-PO(4)) to glycerol-3-phosphate (G3P) to form lysophosphatidic acid (LPA). This enzyme utilizes acyl-phosphate as fatty acyl donor, but not acyl-CoA or acyl-ACP. The polypeptide is Glycerol-3-phosphate acyltransferase (Mycoplasmoides gallisepticum (strain R(low / passage 15 / clone 2)) (Mycoplasma gallisepticum)).